The sequence spans 698 residues: Probable Xaa-Pro aminopeptidase P (698 aa).

4 residues coordinate Mn(2+): aspartate 509, aspartate 520, glutamate 604, and glutamate 618.

It belongs to the peptidase M24B family. Mn(2+) is required as a cofactor.

The enzyme catalyses Release of any N-terminal amino acid, including proline, that is linked to proline, even from a dipeptide or tripeptide.. Catalyzes the removal of a penultimate prolyl residue from the N-termini of peptides. The sequence is that of Probable Xaa-Pro aminopeptidase P (AMPP) from Arthroderma benhamiae (strain ATCC MYA-4681 / CBS 112371) (Trichophyton mentagrophytes).